The primary structure comprises 793 residues: Phenylalanine--tRNA ligase beta subunit (793 aa).

A tRNA-binding domain is found at 39 to 148 (AAPFKGVKAA…EGDFPGVDLH (110 aa)). The B5 domain occupies 401-476 (PPQATIILRK…RLYGYDRLPS (76 aa)). Residues Asp454, Asp460, Glu463, and Glu464 each coordinate Mg(2+). The 94-residue stretch at 699–792 (SKFPAIRRDI…LVTELGAIIR (94 aa)) folds into the FDX-ACB domain.

It belongs to the phenylalanyl-tRNA synthetase beta subunit family. Type 1 subfamily. In terms of assembly, tetramer of two alpha and two beta subunits. Mg(2+) serves as cofactor.

It localises to the cytoplasm. The enzyme catalyses tRNA(Phe) + L-phenylalanine + ATP = L-phenylalanyl-tRNA(Phe) + AMP + diphosphate + H(+). The sequence is that of Phenylalanine--tRNA ligase beta subunit from Nitrosococcus oceani (strain ATCC 19707 / BCRC 17464 / JCM 30415 / NCIMB 11848 / C-107).